Consider the following 194-residue polypeptide: Large ribosomal subunit protein uL18 (194 aa).

The protein belongs to the universal ribosomal protein uL18 family. In terms of assembly, part of the 50S ribosomal subunit. Contacts the 5S and 23S rRNAs.

In terms of biological role, this is one of the proteins that bind and probably mediate the attachment of the 5S RNA into the large ribosomal subunit, where it forms part of the central protuberance. The protein is Large ribosomal subunit protein uL18 of Methanococcus aeolicus (strain ATCC BAA-1280 / DSM 17508 / OCM 812 / Nankai-3).